The following is a 609-amino-acid chain: Myoneurin (609 aa).

The BTB domain occupies 24 to 89; the sequence is CDCTILIGDF…IYSGNLNYDS (66 aa). Short sequence motifs (nuclear localization signal) lie at residues 172–188 and 257–262; these read KKSQKIKRWKRPLRSHQ and QKPAKL. 8 consecutive C2H2-type zinc fingers follow at residues 301-323, 329-351, 357-380, 386-408, 414-436, 442-464, 470-492, and 498-521; these read PVCNTCGKVFSEASSLRRHMRIH, YVCHLCAKAFTQCNQLKTHVRTH, YQCKKCDKGFAQKCQLVFHSRMHH, YKCDVCNLQFATSSNLKIHARKH, YVCDRCGQRFAQASTLTYHVRRH, YVCDTCGKAFAVSSSLITHARKH, YICGVCRKSFISSGELNKHFRSH, and FVCEVCGNSYTDVKNLKKHKLKMH. The tract at residues 528 to 553 is disordered; that stretch reads IEMKSAENSSSSEDSTTKSPEPESLE. Residues 533–546 are compositionally biased toward low complexity; it reads AENSSSSEDSTTKS.

The protein resides in the nucleus. This Xenopus laevis (African clawed frog) protein is Myoneurin (mynn).